The chain runs to 123 residues: RNA silencing suppressor (123 aa).

The basic stretch occupies residues 52-55 (KRRR). A C4-type zinc finger spans residues 62–83 (CVRCFRVNPGFYFTKRCDGITC).

Belongs to the carlaviruses nucleic acid-binding protein family.

Its function is as follows. Suppressor of viral-induced RNA silencing. The potential mechanism of action is based on sequestering siRNAs. This is RNA silencing suppressor from Populus balsamifera (Balsam poplar).